The chain runs to 1082 residues: RE1-silencing transcription factor (1082 aa).

The segment at 32 to 117 (DLHELSKAEL…SLELSAVEPQ (86 aa)) is interaction with SIN3A. The segment at 43 to 57 (APQLIMLANVALTGE) is interaction with SIN3B. The interaction with ZFP90 stretch occupies residues 140–413 (PVAEDKCRSS…KSKHPTCPSK (274 aa)). The C2H2-type 1 zinc finger occupies 154 to 176 (FRCKPCQYEAESEEQFVHHIRIH). A required for binding to the neuron-restrictive silencer element region spans residues 196–207 (SGSSPAEEGEFS). 7 C2H2-type zinc fingers span residues 211–235 (IRCD…HHLR), 243–265 (YKCI…LRNH), 271–293 (YTCS…VRTH), 299–321 (YKCE…MRTH), 327–350 (FKCD…RQVH), 356–378 (LNCP…VELH), and 384–407 (FNCP…KSKH). 2 disordered regions span residues 408–809 (PTCP…ELSL) and 831–1027 (SKLL…KAGL). The segment covering 440–475 (EKMENEQTKTKGDVSGKKNEKPVKAVGKDASKEKKP) has biased composition (basic and acidic residues). Low complexity predominate over residues 477–497 (SSVSVVQVTTRTRKSAVAAET). Residues 581–597 (KGTKKTPPKTKTSKKGG) are compositionally biased toward basic residues. Residues 630–640 (VTGSGSSQTEL) are compositionally biased toward polar residues. 2 stretches are compositionally biased toward pro residues: residues 684 to 713 (YPQP…PAPP) and 729 to 751 (KEPP…PPPM). Basic and acidic residues-rich tracts occupy residues 798–807 (LRKDRAEKEL) and 854–864 (NSREETPKDQE). Residues 900-909 (RVSSSEQNSA) show a composition bias toward polar residues. Residue S950 is modified to Phosphoserine. Residues 985–1063 (EGIHSHDGSD…HLNRHLVNVY (79 aa)) form an interaction with RCOR1 region. The segment at 1036–1058 (FVCIFCDRSFRKEKDYSKHLNRH) adopts a C2H2-type 9 zinc-finger fold.

In terms of assembly, isoform 1 and isoform 2 form heterodimers. Isoform 2: Forms homodimers and homooligomers; binds to the neuron-restrictive silencer element (NRSE) as monomer. Interacts with SIN3A, SIN3B and RCOR1. Interacts with CDYL. Interacts with EHMT1 and EHMT2 only in the presence of CDYL. Part of a complex containing at least CDYL, REST, WIZ, SETB1, EHMT1 and EHMT2. Interacts (via zinc-finger DNA-binding domain) with ZFP90 (via N- and C-termini); the interaction inhibits REST repressor activity. Interacts (via C2H2-type zinc finger 5) with PRICKLE1. Interacts with FBXW11 and BTRC. Interacts with USP7. Post-translationally, O-glycosylated. In terms of processing, phosphorylated; phosphorylation is required for ubiquitination. Ubiquitinated; ubiquitination is mediated by BTRC and leads to proteasomal degradation in G2 phase. Ubiquitination increases during neuronal differentiation. Deubiquitinated by USP7; leading to its stabilization and promoting the maintenance of neural progenitor cells. In terms of tissue distribution, expressed in the hippocampus, including quiescent neuronal progenitor (QNP) cells, transient-amplifying progenitor (TAP) cells, neuroblasts and mature neurons (at protein level). Expressed in embryonic stem cells (at protein level). Expressed in many non-neuronal tissues including the heart and liver. Abundantly expressed in osteoblastic lineage cells. Expressed in the spleen, kidney, blood cells, cortex, neocortex and in the utricle, saccule and organ of Corti of the inner ear. Isoform 2: Expressed in the cortex, neocortex and in the utricle, saccule and organ of Corti of the inner ear.

It localises to the nucleus. The protein resides in the cytoplasm. In terms of biological role, transcriptional repressor which binds neuron-restrictive silencer element (NRSE) and represses neuronal gene transcription in non-neuronal cells. Restricts the expression of neuronal genes by associating with two distinct corepressors, SIN3A and RCOR1, which in turn recruit histone deacetylase to the promoters of REST-regulated genes. Mediates repression by recruiting the BHC complex at RE1/NRSE sites which acts by deacetylating and demethylating specific sites on histones, thereby acting as a chromatin modifier. Transcriptional repression by REST-CDYL via the recruitment of histone methyltransferase EHMT2 may be important in transformation suppression. Represses the expression of SRRM4 in non-neural cells to prevent the activation of neural-specific splicing events and to prevent production of REST isoform 2. Repressor activity may be inhibited by forming heterodimers with isoform 2, thereby preventing binding to NRSE or binding to corepressors and leading to derepression of target genes. Also maintains repression of neuronal genes in neural stem cells, and allows transcription and differentiation into neurons by dissociation from RE1/NRSE sites of target genes. Thereby is involved in maintaining the quiescent state of adult neural stem cells and preventing premature differentiation into mature neurons. Plays a role in the developmental switch in synaptic NMDA receptor composition during postnatal development, by repressing GRIN2B expression and thereby altering NMDA receptor properties from containing primarily GRIN2B to primarily GRIN2A subunits. Acts as a regulator of osteoblast differentiation. Key repressor of gene expression in hypoxia; represses genes in hypoxia by direct binding to an RE1/NRSE site on their promoter regions. May also function in stress resistance in the brain during aging; possibly by regulating expression of genes involved in cell death and in the stress response. Repressor of gene expression in the hippocampus after ischemia by directly binding to RE1/NRSE sites and recruiting SIN3A and RCOR1 to promoters of target genes, thereby promoting changes in chromatin modifications and ischemia-induced cell death. After ischemia, might play a role in repression of miR-132 expression in hippocampal neurons, thereby leading to neuronal cell death. Its function is as follows. Binds to the 3' region of the neuron-restrictive silencer element (NRSE), with lower affinity than isoform 1. Exhibits weaker repressor activity compared to isoform 1. May negatively regulate the repressor activity of isoform 1 by binding to isoform 1, thereby preventing its binding to NRSE and leading to derepression of target genes. However, in another study, does not appear to be implicated in repressor activity of a NRSE motif-containing reporter construct nor in inhibitory activity on the isoform 1 transcriptional repressor activity. Post-transcriptional inactivation of REST by SRRM4-dependent alternative splicing into isoform 2 is required in mechanosensory hair cells in the inner ear for derepression of neuronal genes, maintenance of hair cells and hearing. In Mus musculus (Mouse), this protein is RE1-silencing transcription factor (Rest).